Consider the following 614-residue polypeptide: MSSTKQWDISKALAVATLFHFFHNVGKFCLMPFLTLYFRQLGLGASLVGIIIGFKHAVHLLWAPLCSFLAKSHRKRRFFIMASLLLSAGAGGLFAFYPPLDKNIVSLFCNTSMPWKEQLNPPIDISVFVDENISTTYATPTNHQTTNGEFNTFPSSVAEVAIDTTMASSLDMKTTTHQRFTDQFPSSSPLTRNKRLEHQTRKVLGSGKAQKANSSKSSASNSKQRSSLNNQTAPFATHPNVSHRPSIHERKVRDISIDFTDSFLDPKHKIFLIVLAMVIIWEILAAPLEWIADDSLYEYLDFVDATDRHGKLWIWGYLGASMGSIFITFLIDNLNCFVIFDIPRVSFHFFCYGGFLISTFFLSTLYPVHVSKKTEHSNKTVKALGFLGSDGRIVLTALTVFVLGAVGSTIQNFLFWQMQDIGSNELYMGLSIAAGLLSELALYFFRNKLLKTLTFKWMVVLGLLSLGIQFLYYSFLWTPWSVVAIQILNAFSSGVIWWAINSQVVDVASPGTERSLQLTLRWLAYGCGSSAGSFASGFIISRFSLAVLYQACCITLLTWIVIFLLVQPKLPNIKKINYSRLLAADNSDMSDSDEEQDRDWLVTAMKDENSNRKW.

2 helical membrane passes run 41–61 and 78–98; these read LGLGASLVGIIIGFKHAVHLL and FFIMASLLLSAGAGGLFAFYP. Positions 177-191 are enriched in polar residues; that stretch reads HQRFTDQFPSSSPLT. The disordered stretch occupies residues 177–243; the sequence is HQRFTDQFPS…PFATHPNVSH (67 aa). A compositionally biased stretch (low complexity) spans 205–227; it reads GSGKAQKANSSKSSASNSKQRSS. Transmembrane regions (helical) follow at residues 270–290, 312–332, 345–365, 393–413, 425–445, 457–477, 480–500, 520–540, and 546–566; these read IFLIVLAMVIIWEILAAPLEW, LWIWGYLGASMGSIFITFLID, VSFHFFCYGGFLISTFFLSTL, IVLTALTVFVLGAVGSTIQNF, ELYMGLSIAAGLLSELALYFF, WMVVLGLLSLGIQFLYYSFLW, WSVVAIQILNAFSSGVIWWAI, LRWLAYGCGSSAGSFASGFII, and AVLYQACCITLLTWIVIFLLV.

Belongs to the major facilitator superfamily. MFSD6 family.

Its subcellular location is the membrane. The protein is Major facilitator superfamily domain-containing protein 6-like protein B (mfsd6l-b) of Xenopus laevis (African clawed frog).